The chain runs to 83 residues: Normal mucosa of esophagus-specific gene 1 protein (83 aa).

This sequence belongs to the complex I NDUFA4 subunit family. In terms of tissue distribution, expressed mainly in stomach, placenta, small intestine and colon, as well as in normal mucosa of esophagus. Down-regulated in esophageal squamous cell carcinoma.

Its subcellular location is the nucleus. This chain is Normal mucosa of esophagus-specific gene 1 protein (NMES1), found in Homo sapiens (Human).